A 182-amino-acid polypeptide reads, in one-letter code: UPF0149 protein CGSHiEE_07975 (182 aa).

This sequence belongs to the UPF0149 family.

The chain is UPF0149 protein CGSHiEE_07975 from Haemophilus influenzae (strain PittEE).